The following is a 117-amino-acid chain: MDSNLRNLKDFFTLYNKVTELCFSRCVDNLSQRDLGGHEDLCVDRCVTKFARFNQNMMKVYVDVQTTINAKRMEEMEENARKAEQQQREQEKERLKEAAATAVLTPVQPPVAGNLSM.

The short motif at Cys22–Cys46 is the Twin CX3C motif element. Intrachain disulfides connect Cys22/Cys46 and Cys26/Cys42. Basic and acidic residues predominate over residues Glu75 to Glu97. The segment at Glu75–Met117 is disordered.

Belongs to the small Tim family. Component of the TIM22 complex, whose core is composed of Tim22, associated with peripheral protein Tim9b/Tim10b and the 70 kDa heterohexamer. In most cases, the 70 kDa complex is composed of TIMM9 and TIMM10.

Its subcellular location is the mitochondrion inner membrane. In terms of biological role, component of the TIM22 complex, a complex that mediates the import and insertion of multi-pass transmembrane proteins into the mitochondrial inner membrane. The TIM22 complex forms a twin-pore translocase that uses the membrane potential as the external driving force. In the TIM22 complex, it may act as a docking point for the soluble 70 kDa complex that guides the target proteins in transit through the aqueous mitochondrial intermembrane space. The chain is Mitochondrial import inner membrane translocase subunit Tim10B (Tim9b) from Drosophila melanogaster (Fruit fly).